We begin with the raw amino-acid sequence, 84 residues long: Small ribosomal subunit protein bS18B (84 aa).

Basic residues predominate over residues 1 to 10; sequence MAVKRAPSKK. The interval 1–20 is disordered; sequence MAVKRAPSKKVRAEQARRPK.

Belongs to the bacterial ribosomal protein bS18 family. Part of the 30S ribosomal subunit. Forms a tight heterodimer with protein bS6.

Functionally, binds as a heterodimer with protein bS6 to the central domain of the 16S rRNA, where it helps stabilize the platform of the 30S subunit. The protein is Small ribosomal subunit protein bS18B of Nocardia farcinica (strain IFM 10152).